A 319-amino-acid polypeptide reads, in one-letter code: Annexin A5 (319 aa).

Ala2 is subject to N-acetylalanine. Annexin repeat units follow at residues Phe13 to Lys84, Pro85 to Gln156, Ala168 to Lys240, and Ser244 to Gly315. Lys27 participates in a covalent cross-link: Glycyl lysine isopeptide (Lys-Gly) (interchain with G-Cter in SUMO1); alternate. Lys27 participates in a covalent cross-link: Glycyl lysine isopeptide (Lys-Gly) (interchain with G-Cter in SUMO2); alternate. At Ser35 the chain carries Phosphoserine. N6-acetyllysine occurs at positions 68, 74, 77, 95, and 99. N6-succinyllysine is present on Lys288. The [IL]-x-C-x-x-[DE] motif motif lies at Leu312–Asp318.

It belongs to the annexin family. Monomer. Binds ATRX and EIF5B. Post-translationally, S-nitrosylation is induced by interferon-gamma and oxidatively-modified low-densitity lipoprotein (LDL(ox)) possibly implicating the iNOS-S100A8/9 transnitrosylase complex.

In terms of biological role, this protein is an anticoagulant protein that acts as an indirect inhibitor of the thromboplastin-specific complex, which is involved in the blood coagulation cascade. The sequence is that of Annexin A5 (Anxa5) from Mus musculus (Mouse).